A 338-amino-acid polypeptide reads, in one-letter code: Aspartate-semialdehyde dehydrogenase (338 aa).

Residues 13–16 (SGAV) and 41–42 (RS) each bind NADP(+). A phosphate-binding site is contributed by arginine 101. Cysteine 132 serves as the catalytic Acyl-thioester intermediate. Glutamine 159 provides a ligand contact to substrate. Residues 162–163 (SG) and proline 187 each bind NADP(+). Lysine 216 is a binding site for phosphate. Arginine 238 provides a ligand contact to substrate. Residue histidine 245 is the Proton acceptor of the active site. Asparagine 317 provides a ligand contact to NADP(+).

Belongs to the aspartate-semialdehyde dehydrogenase family. As to quaternary structure, homodimer.

The catalysed reaction is L-aspartate 4-semialdehyde + phosphate + NADP(+) = 4-phospho-L-aspartate + NADPH + H(+). Its pathway is amino-acid biosynthesis; L-lysine biosynthesis via DAP pathway; (S)-tetrahydrodipicolinate from L-aspartate: step 2/4. It functions in the pathway amino-acid biosynthesis; L-methionine biosynthesis via de novo pathway; L-homoserine from L-aspartate: step 2/3. The protein operates within amino-acid biosynthesis; L-threonine biosynthesis; L-threonine from L-aspartate: step 2/5. Functionally, catalyzes the NADPH-dependent formation of L-aspartate-semialdehyde (L-ASA) by the reductive dephosphorylation of L-aspartyl-4-phosphate. The sequence is that of Aspartate-semialdehyde dehydrogenase from Shewanella sp. (strain DB6705).